The sequence spans 202 residues: Syndecan-4 (202 aa).

Residues 1-23 (MAPVCLFAPLLLLLLGGFPVAPG) form the signal peptide. Topologically, residues 24-149 (ESIRETEVID…QGSNIFERTE (126 aa)) are extracellular. Disordered regions lie at residues 42–76 (YFSG…TEEP) and 89–138 (LDNH…MSST). A glycan (O-linked (Xyl...) (glycosaminoglycan) serine) is linked at Ser-44. Over residues 48-62 (PDDEDAGGLEQDSDF) the composition is skewed to acidic residues. O-linked (Xyl...) (glycosaminoglycan) serine glycosylation is found at Ser-65 and Ser-67. The span at 105–121 (SEPKELEENEVIPKRVP) shows a compositional bias: basic and acidic residues. A helical transmembrane segment spans residues 150 to 174 (VLAALIVGGVVGILFAVFLILLLVY). Residues 175-202 (RMKKKDEGSYDLGKKPIYKKAPTNEFYA) are Cytoplasmic-facing.

It belongs to the syndecan proteoglycan family. As to quaternary structure, homodimer. Interacts with CDCP1 and SDCBP. Interacts (via its cytoplasmic domain) with GIPC (via its PDZ domain). Interacts (via its cytoplasmic domain) with NUDT16L1. Interacts with DNM2; this interaction is markedly enhanced at focal ahesion site upon induction of focal adhesions and stress-fiber formation. Shedding is enhanced by a number of factors such as heparanase, thrombin or EGF. Also by stress and wound healing. PMA-mediated shedding is inhibited by TIMP3. In terms of processing, O-glycosylated; contains both chondroitin sulfate and heparan sulfate. Ser-44, Ser-65 and Ser-67 can all be modified by either chondroitin sulfate or heparan sulfate, and the protein exists in forms that contain only chondroitin sulfate, only heparan sulfate and both chondroitin sulfate and heparan sulfate.

Its subcellular location is the membrane. The protein localises to the secreted. Functionally, cell surface proteoglycan which regulates exosome biogenesis in concert with SDCBP and PDCD6IP. The polypeptide is Syndecan-4 (Rattus norvegicus (Rat)).